The sequence spans 491 residues: Protein nucleotidyltransferase YdiU (491 aa).

The ATP site is built by Gly94, Gly96, Arg97, Lys117, Asp129, Gly130, Arg180, and Arg187. The active-site Proton acceptor is the Asp256. The Mg(2+) site is built by Asn257 and Asp266. Asp266 is an ATP binding site.

Belongs to the SELO family. Mg(2+) is required as a cofactor. The cofactor is Mn(2+).

It catalyses the reaction L-seryl-[protein] + ATP = 3-O-(5'-adenylyl)-L-seryl-[protein] + diphosphate. It carries out the reaction L-threonyl-[protein] + ATP = 3-O-(5'-adenylyl)-L-threonyl-[protein] + diphosphate. The enzyme catalyses L-tyrosyl-[protein] + ATP = O-(5'-adenylyl)-L-tyrosyl-[protein] + diphosphate. The catalysed reaction is L-histidyl-[protein] + UTP = N(tele)-(5'-uridylyl)-L-histidyl-[protein] + diphosphate. It catalyses the reaction L-seryl-[protein] + UTP = O-(5'-uridylyl)-L-seryl-[protein] + diphosphate. It carries out the reaction L-tyrosyl-[protein] + UTP = O-(5'-uridylyl)-L-tyrosyl-[protein] + diphosphate. In terms of biological role, nucleotidyltransferase involved in the post-translational modification of proteins. It can catalyze the addition of adenosine monophosphate (AMP) or uridine monophosphate (UMP) to a protein, resulting in modifications known as AMPylation and UMPylation. The polypeptide is Protein nucleotidyltransferase YdiU (Clostridium botulinum (strain Eklund 17B / Type B)).